The chain runs to 219 residues: uncharacterized protein (219 aa).

This is an uncharacterized protein from Acanthamoeba polyphaga mimivirus (APMV).